Here is a 245-residue protein sequence, read N- to C-terminus: Transcriptional activator protein ExpR (245 aa).

The region spanning 173-238 (RSNDKDIFSQ…HAIRLGIELQ (66 aa)) is the HTH luxR-type domain. A DNA-binding region (H-T-H motif) is located at residues 197–216 (YQEIALILDIKTGTVKFHIG).

This sequence belongs to the autoinducer-regulated transcriptional regulatory protein family.

Functionally, functions as an OHLL responsive transcriptional regulator that acts in virulence (soft rot disease) through the activation of genes for plant tissue macerating enzymes. This chain is Transcriptional activator protein ExpR (expR), found in Pectobacterium parmentieri.